The sequence spans 87 residues: Small ribosomal subunit protein uS17 (87 aa).

Belongs to the universal ribosomal protein uS17 family. Part of the 30S ribosomal subunit.

In terms of biological role, one of the primary rRNA binding proteins, it binds specifically to the 5'-end of 16S ribosomal RNA. The polypeptide is Small ribosomal subunit protein uS17 (Chromobacterium violaceum (strain ATCC 12472 / DSM 30191 / JCM 1249 / CCUG 213 / NBRC 12614 / NCIMB 9131 / NCTC 9757 / MK)).